Reading from the N-terminus, the 302-residue chain is Pyridoxal 5'-phosphate synthase subunit PdxS (302 aa).

D32 serves as a coordination point for D-ribose 5-phosphate. The active-site Schiff-base intermediate with D-ribose 5-phosphate is K89. G161 provides a ligand contact to D-ribose 5-phosphate. D-glyceraldehyde 3-phosphate is bound at residue R173. Residues G222 and 243–244 (GS) each bind D-ribose 5-phosphate. Residues 276-302 (ASNPGKGMKGEANADLSEGEKLQTRGV) form a disordered region. A compositionally biased stretch (basic and acidic residues) spans 293-302 (EGEKLQTRGV).

This sequence belongs to the PdxS/SNZ family. In the presence of PdxT, forms a dodecamer of heterodimers.

It catalyses the reaction aldehydo-D-ribose 5-phosphate + D-glyceraldehyde 3-phosphate + L-glutamine = pyridoxal 5'-phosphate + L-glutamate + phosphate + 3 H2O + H(+). Its pathway is cofactor biosynthesis; pyridoxal 5'-phosphate biosynthesis. Catalyzes the formation of pyridoxal 5'-phosphate from ribose 5-phosphate (RBP), glyceraldehyde 3-phosphate (G3P) and ammonia. The ammonia is provided by the PdxT subunit. Can also use ribulose 5-phosphate and dihydroxyacetone phosphate as substrates, resulting from enzyme-catalyzed isomerization of RBP and G3P, respectively. In Haloquadratum walsbyi (strain DSM 16790 / HBSQ001), this protein is Pyridoxal 5'-phosphate synthase subunit PdxS.